The following is a 241-amino-acid chain: Tetraspanin-1 (241 aa).

Residues 1–11 (MQCFSFIKTMM) are Cytoplasmic-facing. Residues 12-32 (ILFNLLIFLCGAALLAVGIWV) traverse the membrane as a helical segment. Topologically, residues 33 to 52 (SIDGASFLKIFGPLSSSAMQ) are extracellular. The chain crosses the membrane as a helical span at residues 53–73 (FVNVGYFLIAAGVVVFALGFL). The Cytoplasmic portion of the chain corresponds to 74–88 (GCYGAKTESKCALVT). The chain crosses the membrane as a helical span at residues 89–109 (FFFILLLIFIAEVAAAVVALV). Topologically, residues 110–211 (YTTMAEHFLT…NQLLYDIRTN (102 aa)) are extracellular. Residues asparagine 141, asparagine 154, asparagine 178, and asparagine 184 are each glycosylated (N-linked (GlcNAc...) asparagine). The chain crosses the membrane as a helical span at residues 212 to 232 (AVTVGGVAAGIGGLELAAMIV). At 233 to 241 (SMYLYCNLQ) the chain is on the cytoplasmic side.

This sequence belongs to the tetraspanin (TM4SF) family. In terms of assembly, interacts with SLC19A2. Interacts with NTRK1/TRKA.

Its subcellular location is the cell membrane. It localises to the lysosome membrane. In terms of biological role, structural component of specialized membrane microdomains known as tetraspanin-enriched microdomains (TERMs), which act as platforms for receptor clustering and signaling. Participates thereby in diverse biological functions such as cell signal transduction, adhesion, migration and protein trafficking. Regulates neuronal differentiation in response to NGF by facilitating NGF-mediated activation of NTRK1/TRKA receptor tyrosine kinase and subsequent downstream signaling pathways. Plays a role in the inhibition of TNFalpha-induced apoptosis. Mechanistically, inhibits the NF-kappa-B signaling pathway by blocking phosphorylation of CHUK. Also promotes the stability of the thiamine transporter 1/SLC19A2 in intestinal epithelial cells leading to an increase of thiamine uptake process. The sequence is that of Tetraspanin-1 (TSPAN1) from Homo sapiens (Human).